The following is a 215-amino-acid chain: Jasmonate monooxygenase ABM (215 aa).

The region spanning 2-90 is the ABM domain; that stretch reads FAVIFETRPQ…GVLEDYHLRV (89 aa).

It localises to the endoplasmic reticulum. Its subcellular location is the secreted. It carries out the reaction jasmonate + NADPH + O2 + H(+) = (1R,2R)-12-hydroxyjasmonate + NADP(+) + H2O. In terms of biological role, monooxygenase that converts the endogenous (and likely the host) jasmonate (JA) to its hydroxylated derivative 12-hydroxyjasmonate (12OH-JA), also known as tuberonic acid, a compound that attenuates or disables jasmonate-based host innate immunity and which is essential for proper initiation and elaboration of the blast disease in rice. ABM, together with a polyketide synthase MGG_04775 and the esterase MGG_04774, share the secondary metabolism gene cluster with ABC transporter ABC3, and therefore may also be involved in the synthesis of other important metabolites such as the ABC3 transporter efflux substrate (ATS) and/or additional polyketides. This Pyricularia oryzae (strain 70-15 / ATCC MYA-4617 / FGSC 8958) (Rice blast fungus) protein is Jasmonate monooxygenase ABM.